Here is a 158-residue protein sequence, read N- to C-terminus: Disease resistance response protein Pi49 (158 aa).

It belongs to the BetVI family.

This is Disease resistance response protein Pi49 (DRR49A) from Pisum sativum (Garden pea).